Reading from the N-terminus, the 485-residue chain is Protein nucleotidyltransferase YdiU (485 aa).

The ATP site is built by glycine 90, glycine 92, arginine 93, lysine 113, aspartate 125, glycine 126, arginine 176, and arginine 183. Aspartate 252 serves as the catalytic Proton acceptor. Asparagine 253 and aspartate 262 together coordinate Mg(2+). Residue aspartate 262 coordinates ATP.

It belongs to the SELO family. It depends on Mg(2+) as a cofactor. Mn(2+) is required as a cofactor.

It catalyses the reaction L-seryl-[protein] + ATP = 3-O-(5'-adenylyl)-L-seryl-[protein] + diphosphate. The catalysed reaction is L-threonyl-[protein] + ATP = 3-O-(5'-adenylyl)-L-threonyl-[protein] + diphosphate. It carries out the reaction L-tyrosyl-[protein] + ATP = O-(5'-adenylyl)-L-tyrosyl-[protein] + diphosphate. The enzyme catalyses L-histidyl-[protein] + UTP = N(tele)-(5'-uridylyl)-L-histidyl-[protein] + diphosphate. It catalyses the reaction L-seryl-[protein] + UTP = O-(5'-uridylyl)-L-seryl-[protein] + diphosphate. The catalysed reaction is L-tyrosyl-[protein] + UTP = O-(5'-uridylyl)-L-tyrosyl-[protein] + diphosphate. Nucleotidyltransferase involved in the post-translational modification of proteins. It can catalyze the addition of adenosine monophosphate (AMP) or uridine monophosphate (UMP) to a protein, resulting in modifications known as AMPylation and UMPylation. The sequence is that of Protein nucleotidyltransferase YdiU from Aliivibrio salmonicida (strain LFI1238) (Vibrio salmonicida (strain LFI1238)).